The following is a 775-amino-acid chain: Glutamine--tRNA ligase (775 aa).

A2 carries the post-translational modification N-acetylalanine. S70 is modified (phosphoserine). ATP is bound by residues 271 to 273 (EPN) and 277 to 283 (HIGHAKA). D303 serves as a coordination point for L-glutamine. K309 carries the N6-acetyllysine modification. L-glutamine is bound at residue Y438. Residues T457, 486-487 (RL), and 494-496 (VSK) each bind ATP. A Phosphoserine modification is found at S495.

This sequence belongs to the class-I aminoacyl-tRNA synthetase family. Monomer. Part of a multisubunit complex that groups tRNA ligases for Arg (RARS1), Asp (DARS1), Gln (QARS1), Ile (IARS1), Leu (LARS1), Lys (KARS1), Met (MARS1) the bifunctional ligase for Glu and Pro (EPRS1) and the auxiliary subunits AIMP1/p43, AIMP2/p38 and EEF1E1/p18. Interacts with RARS1. Part of a complex composed of RARS1, QARS1 and AIMP1.

The protein resides in the cytoplasm. Its subcellular location is the cytosol. The enzyme catalyses tRNA(Gln) + L-glutamine + ATP = L-glutaminyl-tRNA(Gln) + AMP + diphosphate. Its function is as follows. Glutamine--tRNA ligase. Plays a critical role in brain development. The polypeptide is Glutamine--tRNA ligase (Qars1) (Mus musculus (Mouse)).